A 41-amino-acid chain; its full sequence is Large ribosomal subunit protein bL36 (41 aa).

It belongs to the bacterial ribosomal protein bL36 family.

This chain is Large ribosomal subunit protein bL36, found in Parvibaculum lavamentivorans (strain DS-1 / DSM 13023 / NCIMB 13966).